The following is a 340-amino-acid chain: Phosphoribosylformylglycinamidine cyclo-ligase (340 aa).

Belongs to the AIR synthase family.

It is found in the cytoplasm. It carries out the reaction 2-formamido-N(1)-(5-O-phospho-beta-D-ribosyl)acetamidine + ATP = 5-amino-1-(5-phospho-beta-D-ribosyl)imidazole + ADP + phosphate + H(+). It functions in the pathway purine metabolism; IMP biosynthesis via de novo pathway; 5-amino-1-(5-phospho-D-ribosyl)imidazole from N(2)-formyl-N(1)-(5-phospho-D-ribosyl)glycinamide: step 2/2. This is Phosphoribosylformylglycinamidine cyclo-ligase from Streptococcus pyogenes serotype M18 (strain MGAS8232).